A 409-amino-acid polypeptide reads, in one-letter code: Phenoxybenzoate dioxygenase subunit alpha (409 aa).

One can recognise a Rieske domain in the interval 45–149 (WQPVALSADV…VEERYGLVFA (105 aa)). C85, H87, C104, and H107 together coordinate [2Fe-2S] cluster. Positions 210 and 215 each coordinate Fe cation.

Belongs to the bacterial ring-hydroxylating dioxygenase alpha subunit family. In terms of assembly, this dioxygenase system consists of two proteins: the alpha subunit (PobA) and a subunit (PobB) that acts as a ferredoxin and a ferredoxin reductase. [2Fe-2S] cluster is required as a cofactor. Requires Fe cation as cofactor.

The protein operates within aromatic compound metabolism; carboxydiphenyl ether degradation. Degrades exclusively diarylether compounds having carboxyl groups in the 3- or 4-position. Yields a hemiacetal that spontaneously hydrolyzes to phenol and protocatechuate. This chain is Phenoxybenzoate dioxygenase subunit alpha (pobA), found in Ectopseudomonas oleovorans (Pseudomonas oleovorans).